The sequence spans 990 residues: Aminopeptidase Q (990 aa).

The Cytoplasmic portion of the chain corresponds to 2 to 13; that stretch reads GPPSSSGFYVSR. A helical; Signal-anchor for type II membrane protein transmembrane segment spans residues 14–34; that stretch reads AVALLLAGLVAALLLALAVLA. Residues 35–990 are Lumenal-facing; the sequence is ALYGHCERVP…RIAAWLRRNT (956 aa). The interval 48–91 is disordered; the sequence is LPGLRDLEAESSPPLRQKPTPTPKPSSARELAVTTTPSNWRPPG. Residues Asn132 and Asn168 are each glycosylated (N-linked (GlcNAc...) asparagine). Glu240 provides a ligand contact to substrate. N-linked (GlcNAc...) asparagine glycans are attached at residues Asn261, Asn288, Asn319, and Asn346. Residue 379–383 participates in substrate binding; it reads HAMEN. His415 is a Zn(2+) binding site. The Proton acceptor role is filled by Glu416. Zn(2+) contacts are provided by His419 and Glu438. The active-site Proton donor is the Tyr503. N-linked (GlcNAc...) asparagine glycans are attached at residues Asn607 and Asn653.

Belongs to the peptidase M1 family. Homodimer. It depends on Zn(2+) as a cofactor. Post-translationally, N-glycosylated. In terms of tissue distribution, specifically expressed in placenta and not in other tissues. Mainly found at the cell surface region of the extravillous trophoblasts. Detected on extravillous trophoblasts in the outer layer of the chorion laeve in the fetal membrane Not detected on either fetal amnionic epithelial cells or maternal decidual cells. Also detected in the migrating extravillous trophoblasts in the maternal decidual tissues (at protein level).

Its subcellular location is the membrane. Its activity is regulated as follows. Inhibited by bestatin. Functionally, metalloprotease which may be important for placentation by regulating biological activity of key peptides at the embryo-maternal interface. On synthetic substrates it shows a marked preference for Leu-4-methylcoumaryl-7-amide (Leu-MCA) over Met-MCA, Arg-LCA and Lys-LCA. Cleaves the N-terminal amino acid of several peptides such as angiotensin-3, kisspeptin-10 and endokinin C. This is Aminopeptidase Q from Homo sapiens (Human).